The sequence spans 418 residues: Serine hydroxymethyltransferase (418 aa).

(6S)-5,6,7,8-tetrahydrofolate-binding positions include Leu-118 and Gly-122–Leu-124. Lys-227 bears the N6-(pyridoxal phosphate)lysine mark. Glu-242 provides a ligand contact to (6S)-5,6,7,8-tetrahydrofolate.

Belongs to the SHMT family. Homodimer. It depends on pyridoxal 5'-phosphate as a cofactor.

It localises to the cytoplasm. It carries out the reaction (6R)-5,10-methylene-5,6,7,8-tetrahydrofolate + glycine + H2O = (6S)-5,6,7,8-tetrahydrofolate + L-serine. The protein operates within one-carbon metabolism; tetrahydrofolate interconversion. Its pathway is amino-acid biosynthesis; glycine biosynthesis; glycine from L-serine: step 1/1. Catalyzes the reversible interconversion of serine and glycine with tetrahydrofolate (THF) serving as the one-carbon carrier. This reaction serves as the major source of one-carbon groups required for the biosynthesis of purines, thymidylate, methionine, and other important biomolecules. Also exhibits THF-independent aldolase activity toward beta-hydroxyamino acids, producing glycine and aldehydes, via a retro-aldol mechanism. The polypeptide is Serine hydroxymethyltransferase (Chloroflexus aggregans (strain MD-66 / DSM 9485)).